A 429-amino-acid polypeptide reads, in one-letter code: Enolase (429 aa).

Residue Gln-163 participates in (2R)-2-phosphoglycerate binding. Glu-205 (proton donor) is an active-site residue. Positions 242, 285, and 312 each coordinate Mg(2+). Lys-337, Arg-366, Ser-367, and Lys-388 together coordinate (2R)-2-phosphoglycerate. The active-site Proton acceptor is the Lys-337.

Belongs to the enolase family. Mg(2+) is required as a cofactor.

It localises to the cytoplasm. The protein localises to the secreted. Its subcellular location is the cell surface. The enzyme catalyses (2R)-2-phosphoglycerate = phosphoenolpyruvate + H2O. It participates in carbohydrate degradation; glycolysis; pyruvate from D-glyceraldehyde 3-phosphate: step 4/5. Functionally, catalyzes the reversible conversion of 2-phosphoglycerate (2-PG) into phosphoenolpyruvate (PEP). It is essential for the degradation of carbohydrates via glycolysis. This Methylorubrum populi (strain ATCC BAA-705 / NCIMB 13946 / BJ001) (Methylobacterium populi) protein is Enolase.